Here is a 663-residue protein sequence, read N- to C-terminus: Methionine--tRNA ligase (663 aa).

The 'HIGH' region signature appears at 10-20; that stretch reads AYTNGPLHLGH. C142, C145, C154, and C157 together coordinate Zn(2+). The 'KMSKS' region signature appears at 323–327; sequence KMSTS. T326 is an ATP binding site. In terms of domain architecture, tRNA-binding spans 563 to 663; it reads YFTKVDLRVG…REISLGSKIH (101 aa).

It belongs to the class-I aminoacyl-tRNA synthetase family. MetG type 1 subfamily. Homodimer. The cofactor is Zn(2+).

Its subcellular location is the cytoplasm. The enzyme catalyses tRNA(Met) + L-methionine + ATP = L-methionyl-tRNA(Met) + AMP + diphosphate. In terms of biological role, is required not only for elongation of protein synthesis but also for the initiation of all mRNA translation through initiator tRNA(fMet) aminoacylation. The sequence is that of Methionine--tRNA ligase from Methanococcus vannielii (strain ATCC 35089 / DSM 1224 / JCM 13029 / OCM 148 / SB).